An 85-amino-acid polypeptide reads, in one-letter code: Small ribosomal subunit protein uS17 (85 aa).

This sequence belongs to the universal ribosomal protein uS17 family. In terms of assembly, part of the 30S ribosomal subunit.

One of the primary rRNA binding proteins, it binds specifically to the 5'-end of 16S ribosomal RNA. The polypeptide is Small ribosomal subunit protein uS17 (Geobacter sp. (strain M21)).